A 3313-amino-acid polypeptide reads, in one-letter code: Cadherin EGF LAG seven-pass G-type receptor 3 (3313 aa).

A signal peptide spans 1–31; that stretch reads MARRPLWWGLPGPSTPLLLLLLFSLFPSSRE. At 32–2538 the chain is on the extracellular side; it reads EMGGGGDQGW…RLEGDLELLA (2507 aa). Disordered stretches follow at residues 148-187 and 205-269; these read LPLD…RNGR and EPGH…RMRS. Over residues 258-268 the composition is skewed to basic and acidic residues; sequence HESRTAPERMR. Cadherin domains lie at 317-424, 425-536, 537-642, 643-747, 748-849, 850-952, 953-1058, 1059-1160, and 1161-1257; these read PQYN…APVF, EQAQ…APQF, SEKR…SPIF, VSTP…RPEF, TMKE…RPVF, QSAH…APQF, VASH…APVF, PAEE…SPVL, and NNFQ…VVII. Asn623 is a glycosylation site (N-linked (GlcNAc...) asparagine). Asn838 is a glycosylation site (N-linked (GlcNAc...) asparagine). N-linked (GlcNAc...) asparagine glycosylation is found at Asn1173, Asn1213, Asn1308, and Asn1318. In terms of domain architecture, EGF-like 1; calcium-binding spans 1366 to 1424; it reads DDNVCLREPCENYMKCVSVLRFDSSAPFLASASTLFRPIQPIAGLRCRCPPGFTGDFCE. 9 disulfides stabilise this stretch: Cys1370/Cys1381, Cys1375/Cys1412, Cys1414/Cys1423, Cys1430/Cys1441, Cys1435/Cys1450, Cys1452/Cys1461, Cys1470/Cys1481, Cys1475/Cys1491, and Cys1493/Cys1504. The 37-residue stretch at 1426–1462 folds into the EGF-like 2; calcium-binding domain; sequence ELDLCYSNPCRNGGACARREGGYTCVCRPRFTGEDCE. Positions 1466 to 1505 constitute an EGF-like 3; calcium-binding domain; that stretch reads EAGRCVPGVCRNGGTCTNAPNGGFRCQCPAGGAFEGPRCE. The Laminin G-like 1 domain occupies 1506–1710; sequence VAARSFPPSS…VANNGTTAGC (205 aa). N-linked (GlcNAc...) asparagine glycosylation is found at Asn1640 and Asn1704. Intrachain disulfides connect Cys1684–Cys1710, Cys1717–Cys1728, Cys1722–Cys1737, and Cys1739–Cys1748. In terms of domain architecture, EGF-like 4; calcium-binding spans 1713 to 1749; it reads KSHFCASGPCKNGGLCSERWGGFSCDCPVGFGGKDCR. The region spanning 1753–1935 is the Laminin G-like 2 domain; it reads AHPYHFQGNG…SHRINVEPGC (183 aa). The N-linked (GlcNAc...) asparagine glycan is linked to Asn1761. 9 disulfides stabilise this stretch: Cys1906/Cys1935, Cys1941/Cys1952, Cys1946/Cys1961, Cys1963/Cys1972, Cys1976/Cys1987, Cys1981/Cys1999, Cys2001/Cys2010, Cys2018/Cys2031, and Cys2033/Cys2043. The 36-residue stretch at 1937 to 1972 folds into the EGF-like 5; calcium-binding domain; the sequence is VTNPCASGPCPPHANCKDLWQTFSCTCWPGYYGPGC. (3R)-3-hydroxyaspartate is present on Asp1954. The EGF-like 6; calcium-binding domain maps to 1973 to 2011; sequence VDACLLNPCQNQGSCRHLQGGPHGYTCDCASGYFGQHCE. One can recognise an EGF-like 7; calcium-binding domain in the interval 2012-2044; sequence HRMDQQCPRGWWGSPTCGPCNCDVHKGFDPNCN. N-linked (GlcNAc...) asparagine glycosylation occurs at Asn2044. Residues 2046-2081 form the EGF-like 8; calcium-binding domain; that stretch reads TSGQCHCKEFHYRPRGSDSCLPCDCYPVGSTSRSCA. 5 cysteine pairs are disulfide-bonded: Cys2050-Cys2065, Cys2052-Cys2068, Cys2070-Cys2080, Cys2089-Cys2098, and Cys2101-Cys2113. Positions 2068 to 2115 constitute a Laminin EGF-like domain; that stretch reads CDCYPVGSTSRSCAPHSGQCPCRPGALGRQCNSCDSPFAEVTASGCRV. Tyr2117 bears the Phosphotyrosine mark. Residues Asn2173, Asn2192, Asn2382, Asn2472, and Asn2504 are each glycosylated (N-linked (GlcNAc...) asparagine). The tract at residues 2356–2395 is disordered; it reads HTHVLLPSQSPQPSPSEVLPTSSNAENATASGVVSPPAPL. A GAIN-B domain is found at 2364–2528; it reads QSPQPSPSEV…GVLMDASPRE (165 aa). Residues 2374-2387 show a composition bias toward polar residues; the sequence is LPTSSNAENATASG. 2 disulfides stabilise this stretch: Cys2478–Cys2510 and Cys2498–Cys2512. Residues 2478-2528 form a GPS region; that stretch reads CVQWDPPGPADQHGMWTARDCELVHRNGSHARCRCSRTGTFGVLMDASPRE. A helical membrane pass occupies residues 2539–2559; the sequence is VFTHVVVAASVTALVLTAAVL. The Cytoplasmic portion of the chain corresponds to 2560-2570; it reads LSLRSLKSNVR. A helical transmembrane segment spans residues 2571-2591; sequence GIHANVAAALGVAELLFLLGI. Over 2592–2599 the chain is Extracellular; sequence HRTHNQLL. The chain crosses the membrane as a helical span at residues 2600–2620; that stretch reads CTVVAILLHYFFLSTFAWLLV. Residues 2621 to 2641 are Cytoplasmic-facing; the sequence is QGLHLYRMQVEPRNVDRGAMR. Residues 2642–2662 form a helical membrane-spanning segment; the sequence is FYHALGWGVPAVLLGLAVGLD. At 2663–2679 the chain is on the extracellular side; sequence PEGYGNPDFCWISIHEP. The chain crosses the membrane as a helical span at residues 2680 to 2700; that stretch reads LIWSFAGPIVLVIVMNGIMFL. Residues 2701-2724 lie on the Cytoplasmic side of the membrane; it reads LAARTSCSTGQREAKKTSVLRTLR. Residues 2725–2745 traverse the membrane as a helical segment; it reads SSFLLLLLVSASWLFGLLAVN. At 2746–2752 the chain is on the extracellular side; it reads HSVLAFH. A helical membrane pass occupies residues 2753–2773; it reads YLHAGLCGLQGLAVLLLFCVL. The Cytoplasmic segment spans residues 2774-3313; sequence NADARAAWTP…SEVPRSEGHS (540 aa). Disordered regions lie at residues 2887–2927 and 2977–3004; these read AGAD…RPLR and SNKD…RAQR. Positions 2889 to 2899 are enriched in acidic residues; it reads ADSDSDSDLSL. A compositionally biased stretch (basic residues) spans 2918–2927; the sequence is TRGRFQRPLR. Residue Tyr3050 is modified to Phosphotyrosine. 2 disordered regions span residues 3091-3242 and 3255-3313; these read APVL…PSTE and NSSA…EGHS. Ser3098 carries the post-translational modification Phosphoserine. Residues 3102–3119 show a composition bias toward basic and acidic residues; the sequence is SQERLDTAPARLEPRDRG. 2 stretches are compositionally biased toward low complexity: residues 3178-3197 and 3255-3289; these read QRPL…SLSR and NSSA…PSTP. The span at 3290–3301 shows a compositional bias: polar residues; that stretch reads RSATSHSISELS.

Belongs to the G-protein coupled receptor 2 family. LN-TM7 subfamily. Post-translationally, the iron and 2-oxoglutarate dependent 3-hydroxylation of aspartate and asparagine is (R) stereospecific within EGF domains. As to expression, expressed in the brain. Expressed in cerebellum, olfactory bulb, cerebral cortex, hippocampus and brain stem.

It is found in the cell membrane. Receptor that may have an important role in cell/cell signaling during nervous system formation. The polypeptide is Cadherin EGF LAG seven-pass G-type receptor 3 (Celsr3) (Rattus norvegicus (Rat)).